We begin with the raw amino-acid sequence, 207 residues long: ATP-dependent Clp protease proteolytic subunit (207 aa).

The active-site Nucleophile is Ser-111. His-136 is a catalytic residue.

Belongs to the peptidase S14 family. As to quaternary structure, fourteen ClpP subunits assemble into 2 heptameric rings which stack back to back to give a disk-like structure with a central cavity, resembling the structure of eukaryotic proteasomes. Component of the ClpAP and ClpXP complexes.

It localises to the cytoplasm. It carries out the reaction Hydrolysis of proteins to small peptides in the presence of ATP and magnesium. alpha-casein is the usual test substrate. In the absence of ATP, only oligopeptides shorter than five residues are hydrolyzed (such as succinyl-Leu-Tyr-|-NHMec, and Leu-Tyr-Leu-|-Tyr-Trp, in which cleavage of the -Tyr-|-Leu- and -Tyr-|-Trp bonds also occurs).. In terms of biological role, cleaves peptides in various proteins in a process that requires ATP hydrolysis. Has a chymotrypsin-like activity. Plays a major role in the degradation of misfolded proteins. This Salmonella enteritidis PT4 (strain P125109) protein is ATP-dependent Clp protease proteolytic subunit.